A 202-amino-acid chain; its full sequence is Small ribosomal subunit protein uS4 (202 aa).

The 64-residue stretch at 94–157 (SRLDSLVYRA…LEMPLIKNTL (64 aa)) folds into the S4 RNA-binding domain.

The protein belongs to the universal ribosomal protein uS4 family. As to quaternary structure, part of the 30S ribosomal subunit. Contacts protein S5. The interaction surface between S4 and S5 is involved in control of translational fidelity.

In terms of biological role, one of the primary rRNA binding proteins, it binds directly to 16S rRNA where it nucleates assembly of the body of the 30S subunit. Its function is as follows. With S5 and S12 plays an important role in translational accuracy. This is Small ribosomal subunit protein uS4 from Ureaplasma urealyticum serovar 10 (strain ATCC 33699 / Western).